The sequence spans 85 residues: Small ribosomal subunit protein bS16 (85 aa).

It belongs to the bacterial ribosomal protein bS16 family.

The polypeptide is Small ribosomal subunit protein bS16 (Buchnera aphidicola subsp. Schizaphis graminum (strain Sg)).